A 235-amino-acid chain; its full sequence is Putative N-acetylmannosamine-6-phosphate 2-epimerase (235 aa).

Belongs to the NanE family.

The catalysed reaction is an N-acyl-D-glucosamine 6-phosphate = an N-acyl-D-mannosamine 6-phosphate. The protein operates within amino-sugar metabolism; N-acetylneuraminate degradation; D-fructose 6-phosphate from N-acetylneuraminate: step 3/5. Converts N-acetylmannosamine-6-phosphate (ManNAc-6-P) to N-acetylglucosamine-6-phosphate (GlcNAc-6-P). The protein is Putative N-acetylmannosamine-6-phosphate 2-epimerase of Enterobacter sp. (strain 638).